Here is a 314-residue protein sequence, read N- to C-terminus: Olfactory receptor 9Q2 (314 aa).

At 1-25 (MAERNYTVVTEFFLTAFTEHLQWRV) the chain is on the extracellular side. Asn5 is a glycosylation site (N-linked (GlcNAc...) asparagine). The chain crosses the membrane as a helical span at residues 26–46 (PLFLIFLSFYLATMLGNTGMI). Over 47 to 54 (LLIRGDRR) the chain is Cytoplasmic. Residues 55-75 (LHTPMYFFLSHLSLVDICYSS) form a helical membrane-spanning segment. Residues 76 to 99 (AIIPQMLAVLWEHGTTISQARCAA) lie on the Extracellular side of the membrane. Cys97 and Cys189 are oxidised to a cystine. The helical transmembrane segment at 100–120 (QFFLFTFFASIDCYLLAIMAY) threads the bilayer. At 121–139 (DRYTAVCQPLLYVTIITEK) the chain is on the cytoplasmic side. Residues 140–160 (ARWGLVTGAYVAGFFSAFVRT) form a helical membrane-spanning segment. Over 161–197 (VTAFTLSFCGNNEINFIFCDLPPLLKLSCGDSYTQEV) the chain is Extracellular. The chain crosses the membrane as a helical span at residues 198 to 217 (VIIVFALFVMPACILVILVS). The Cytoplasmic segment spans residues 218-237 (YLFIIVAILQIHSAGGRAKT). The chain crosses the membrane as a helical span at residues 238 to 258 (FSTCASHLTAVALFFGTLIFM). Residues 259–271 (YLRDNTGQSSEGD) are Extracellular-facing. The chain crosses the membrane as a helical span at residues 272-292 (RVVSVLYTVVTPMLNPLIYSL). Topologically, residues 293-314 (RNKEVKEATRKALSKSKPARRP) are cytoplasmic.

The protein belongs to the G-protein coupled receptor 1 family.

It is found in the cell membrane. Functionally, odorant receptor. In Homo sapiens (Human), this protein is Olfactory receptor 9Q2 (OR9Q2).